A 252-amino-acid chain; its full sequence is Thiazole synthase (252 aa).

The Schiff-base intermediate with DXP role is filled by Lys-98. 1-deoxy-D-xylulose 5-phosphate-binding positions include Gly-159, 185–186 (AG), and 207–208 (AT).

Belongs to the ThiG family. In terms of assembly, homotetramer. Forms heterodimers with either ThiH or ThiS.

It localises to the cytoplasm. It carries out the reaction [ThiS sulfur-carrier protein]-C-terminal-Gly-aminoethanethioate + 2-iminoacetate + 1-deoxy-D-xylulose 5-phosphate = [ThiS sulfur-carrier protein]-C-terminal Gly-Gly + 2-[(2R,5Z)-2-carboxy-4-methylthiazol-5(2H)-ylidene]ethyl phosphate + 2 H2O + H(+). It participates in cofactor biosynthesis; thiamine diphosphate biosynthesis. Catalyzes the rearrangement of 1-deoxy-D-xylulose 5-phosphate (DXP) to produce the thiazole phosphate moiety of thiamine. Sulfur is provided by the thiocarboxylate moiety of the carrier protein ThiS. In vitro, sulfur can be provided by H(2)S. In Mycolicibacterium smegmatis (strain ATCC 700084 / mc(2)155) (Mycobacterium smegmatis), this protein is Thiazole synthase.